Reading from the N-terminus, the 375-residue chain is MVVIGEHRHTQVTVDLQAIKTNISNEMAQKDELTELWAVVKANGYGHGIIQVAQAAKEAGATGFCVAILDEALALRAAGFAEPILVLGITEPEYAPLVAEKDISLAVGTQDWLTTAAAILAANQVTTPLHVHLALDTGMGRIGFQTPEELATAVTTLRQPQSPFDFEGIFTHFATADQADDTYFTHQLNNWKHLIAVVDELPRYVHVSNSATSLWHQACNGNMVRFGVALYGLNPSGRELSAPYPLQPALSLTARLTFVKRLARGKSVSYGATYTAAQDEWIGTVPIGYADGYERRLQGFHVLVDGEFCEIVGRVCMDQLMVRLPHEVPVGAKVTLVGTDGARTISLQDIADYCGTIHYEIACGLAPRVPRVYID.

The Proton acceptor; specific for D-alanine role is filled by Lys41. An N6-(pyridoxal phosphate)lysine modification is found at Lys41. Arg141 lines the substrate pocket. Catalysis depends on Tyr270, which acts as the Proton acceptor; specific for L-alanine. A substrate-binding site is contributed by Met317.

The protein belongs to the alanine racemase family. Requires pyridoxal 5'-phosphate as cofactor.

It catalyses the reaction L-alanine = D-alanine. It participates in amino-acid biosynthesis; D-alanine biosynthesis; D-alanine from L-alanine: step 1/1. In terms of biological role, catalyzes the interconversion of L-alanine and D-alanine. May also act on other amino acids. The protein is Alanine racemase (alr) of Lactiplantibacillus plantarum (strain ATCC BAA-793 / NCIMB 8826 / WCFS1) (Lactobacillus plantarum).